We begin with the raw amino-acid sequence, 329 residues long: GTP 3',8-cyclase (329 aa).

Residues Ala-8 to Ala-234 enclose the Radical SAM core domain. GTP is bound at residue Arg-17. Residues Cys-24 and Cys-28 each coordinate [4Fe-4S] cluster. An S-adenosyl-L-methionine-binding site is contributed by Tyr-30. Cys-31 provides a ligand contact to [4Fe-4S] cluster. Arg-68 lines the GTP pocket. Residue Gly-72 coordinates S-adenosyl-L-methionine. Thr-99 lines the GTP pocket. Ser-123 is a binding site for S-adenosyl-L-methionine. GTP is bound at residue Lys-160. Residue Met-194 coordinates S-adenosyl-L-methionine. Positions 257 and 260 each coordinate [4Fe-4S] cluster. Position 262–264 (Arg-262–Arg-264) interacts with GTP. Residue Cys-274 participates in [4Fe-4S] cluster binding.

It belongs to the radical SAM superfamily. MoaA family. Monomer and homodimer. [4Fe-4S] cluster serves as cofactor.

It catalyses the reaction GTP + AH2 + S-adenosyl-L-methionine = (8S)-3',8-cyclo-7,8-dihydroguanosine 5'-triphosphate + 5'-deoxyadenosine + L-methionine + A + H(+). The protein operates within cofactor biosynthesis; molybdopterin biosynthesis. Catalyzes the cyclization of GTP to (8S)-3',8-cyclo-7,8-dihydroguanosine 5'-triphosphate. This is GTP 3',8-cyclase from Escherichia fergusonii (strain ATCC 35469 / DSM 13698 / CCUG 18766 / IAM 14443 / JCM 21226 / LMG 7866 / NBRC 102419 / NCTC 12128 / CDC 0568-73).